Reading from the N-terminus, the 567-residue chain is Laccase-3 (567 aa).

An N-terminal signal peptide occupies residues 1 to 24 (MASSSSSRLLFLLSCSVLALLAGA). Plastocyanin-like domains follow at residues 32-148 (IVQE…PREN) and 158-310 (REVP…YDCG). Asn-78 is a glycosylation site (N-linked (GlcNAc...) asparagine). Cu cation contacts are provided by His-82, His-84, His-127, and His-129. Asn-148, Asn-187, Asn-203, Asn-298, Asn-330, Asn-379, and Asn-389 each carry an N-linked (GlcNAc...) asparagine glycan. Residues 415-551 (DFPAYPPVQF…AMAFLVEDGY (137 aa)) form the Plastocyanin-like 3 domain. 7 residues coordinate Cu cation: His-468, His-471, His-473, His-530, Cys-531, His-532, and His-536.

It belongs to the multicopper oxidase family. It depends on Cu cation as a cofactor.

It localises to the secreted. The protein localises to the extracellular space. It is found in the apoplast. The enzyme catalyses 4 hydroquinone + O2 = 4 benzosemiquinone + 2 H2O. Its function is as follows. Lignin degradation and detoxification of lignin-derived products. The sequence is that of Laccase-3 (LAC3) from Oryza sativa subsp. japonica (Rice).